The primary structure comprises 210 residues: MSHDHADIVNALIPMVVEQSNRGERSFDIYSRLLRERIIFVTGQVEDHMASVICAQLLFLEAENPKKDIFLYINSPGGVVTAGLAIHDTMQYIRPKVGTLCIGQAASMGSFLLAAGEPGMRVATTNSRIMIHQPSGGAQGMAADIEIQAREILRMRKRLNALYAKYTNQPIEEIEKAMDRDNFLEADEAKAFGLIDKVFDKRPVASEEKE.

Residue S107 is the Nucleophile of the active site. H132 is an active-site residue.

The protein belongs to the peptidase S14 family. Fourteen ClpP subunits assemble into 2 heptameric rings which stack back to back to give a disk-like structure with a central cavity, resembling the structure of eukaryotic proteasomes.

The protein resides in the cytoplasm. It catalyses the reaction Hydrolysis of proteins to small peptides in the presence of ATP and magnesium. alpha-casein is the usual test substrate. In the absence of ATP, only oligopeptides shorter than five residues are hydrolyzed (such as succinyl-Leu-Tyr-|-NHMec, and Leu-Tyr-Leu-|-Tyr-Trp, in which cleavage of the -Tyr-|-Leu- and -Tyr-|-Trp bonds also occurs).. Its function is as follows. Cleaves peptides in various proteins in a process that requires ATP hydrolysis. Has a chymotrypsin-like activity. Plays a major role in the degradation of misfolded proteins. This is ATP-dependent Clp protease proteolytic subunit from Zymomonas mobilis subsp. mobilis (strain ATCC 31821 / ZM4 / CP4).